A 427-amino-acid chain; its full sequence is 3-phosphoshikimate 1-carboxyvinyltransferase (427 aa).

Residues lysine 22, serine 23, and arginine 27 each coordinate 3-phosphoshikimate. Lysine 22 is a phosphoenolpyruvate binding site. Glycine 94 and arginine 122 together coordinate phosphoenolpyruvate. Positions 165, 167, 313, and 340 each coordinate 3-phosphoshikimate. Glutamine 167 serves as a coordination point for phosphoenolpyruvate. Catalysis depends on aspartate 313, which acts as the Proton acceptor. The phosphoenolpyruvate site is built by arginine 344 and arginine 386.

Belongs to the EPSP synthase family. As to quaternary structure, monomer.

The protein localises to the cytoplasm. The enzyme catalyses 3-phosphoshikimate + phosphoenolpyruvate = 5-O-(1-carboxyvinyl)-3-phosphoshikimate + phosphate. It participates in metabolic intermediate biosynthesis; chorismate biosynthesis; chorismate from D-erythrose 4-phosphate and phosphoenolpyruvate: step 6/7. Its function is as follows. Catalyzes the transfer of the enolpyruvyl moiety of phosphoenolpyruvate (PEP) to the 5-hydroxyl of shikimate-3-phosphate (S3P) to produce enolpyruvyl shikimate-3-phosphate and inorganic phosphate. The polypeptide is 3-phosphoshikimate 1-carboxyvinyltransferase (Koribacter versatilis (strain Ellin345)).